The chain runs to 243 residues: tRNA pseudouridine synthase A (243 aa).

Asp54 (nucleophile) is an active-site residue. Tyr112 serves as a coordination point for substrate.

It belongs to the tRNA pseudouridine synthase TruA family. As to quaternary structure, homodimer.

The catalysed reaction is uridine(38/39/40) in tRNA = pseudouridine(38/39/40) in tRNA. Functionally, formation of pseudouridine at positions 38, 39 and 40 in the anticodon stem and loop of transfer RNAs. The chain is tRNA pseudouridine synthase A from Aster yellows witches'-broom phytoplasma (strain AYWB).